The following is a 132-amino-acid chain: Fatty acid-binding protein, brain (132 aa).

V2 carries the post-translational modification N-acetylvaline. 127-129 (RHY) contacts a fatty acid.

This sequence belongs to the calycin superfamily. Fatty-acid binding protein (FABP) family.

It localises to the cytoplasm. FABPs are thought to play a role in the intracellular transport of long-chain fatty acids and their acyl-CoA esters. The polypeptide is Fatty acid-binding protein, brain (FABP7) (Gallus gallus (Chicken)).